The sequence spans 324 residues: bZIP transcription factor 46 (324 aa).

The interval 106 to 127 is disordered; sequence LGGSDDEDPAAAAAAAAPAQRQ. Residues 115–124 are compositionally biased toward low complexity; that stretch reads AAAAAAAAPA. The 46-residue stretch at 242–287 folds into the bZIP domain; sequence VERRQRRMIKNRESAARSRARKQAYIMELEAEVAKLKEQKAELQKK. The basic motif stretch occupies residues 244–263; the sequence is RRQRRMIKNRESAARSRARK. The tract at residues 270–284 is leucine-zipper; that stretch reads LEAEVAKLKEQKAEL.

In terms of assembly, interacts with MODD. Interacts with SAPK2, SAPK6 and SAPK9. In terms of processing, phosphorylated on serine and threonine residues by SAPK2, SAPK6 and SAPK9. Phosphorylation is required for full transactivation activity. In terms of tissue distribution, expressed in roots, shoots, leaves, flag leaves, stems, flowers and panicles. Widely expressed.

It localises to the nucleus. In terms of biological role, transcription factor involved in abscisic acid (ABA) signaling pathway. Transcription factor activity is fully activated by ABA. Acts as a positive regulator of the expression of abiotic stress-responsive genes through an ABA-dependent signaling pathway. Acts as a positive regulator of ABA signaling and drought stress tolerance. Plays an important role in ABA and auxin responses. Involved in ABA signaling and stress responses by directly binding to the ABA-responsive element (ABRE)-containing genes, especially WRKY family genes. Modulates response to auxin. Suppresses auxin signaling by targeting ABRE-containing genes related to auxin metabolism or signaling. The chain is bZIP transcription factor 46 from Oryza sativa subsp. japonica (Rice).